A 372-amino-acid polypeptide reads, in one-letter code: Prostaglandin E synthase 2 (372 aa).

Over 1–54 (MAHAVRALWPHGRALAWRLGDRPALGLHAQSRAGFTGAAGGSGPAATARKGGPR) the chain is Lumenal. A helical transmembrane segment spans residues 55–71 (LLGAAALALGGALGLYH). The Cytoplasmic segment spans residues 72 to 372 (TARWHLRAQD…VEKAIAEAPQ (301 aa)). Residues 87–190 (SATQLSLSSR…DIITYYPPMK (104 aa)) form the Glutaredoxin domain. Ser-92 bears the Phosphoserine mark. Glutathione contacts are provided by residues Val-145 and 161–162 (DS). The GST C-terminal domain occupies 259 to 372 (DYIVKEGNFG…VEKAIAEAPQ (114 aa)).

Belongs to the GST superfamily. As to quaternary structure, may interact with CEBPB. Interacts with EXOSC10. Homodimer. Post-translationally, synthesized as a Golgi membrane-associated protein, and the proteolytic removal of the N-terminal hydrophobic domain leads to the formation of a mature cytosolic enzyme. As to expression, detected in heart (at protein level). Widely expressed. Expressed in heart &gt; kidney &gt; muscle &gt; testis &gt; endometrium = ovary &gt; myometrium = spleen = lung. In endometrium, it is mainly expressed in luminal epithelial cells followed by glandular epithelial cells, but expression is also present in stromal cells at a lower level.

It localises to the microsome membrane. The protein resides in the cytoplasm. It catalyses the reaction prostaglandin H2 = prostaglandin E2. It carries out the reaction prostaglandin H2 = (12S)-hydroxy-(5Z,8E,10E)-heptadecatrienoate + malonaldehyde. It participates in lipid metabolism; prostaglandin biosynthesis. With respect to regulation, isomerase activity is increased by sulfhydril compounds. Dithiothreitol (DTT) is most effective, followed by glutathione (GSH) and 2-mercaptoethanol. In terms of biological role, isomerase that catalyzes the conversion of PGH2 into the more stable prostaglandin E2 (PGE2) (in vitro). The biological function and the GSH-dependent property of PTGES2 is still under debate. In vivo, PTGES2 could form a complex with GSH and heme and would not participate in PGE2 synthesis but would catalyze the degradation of prostaglandin E2 H2 (PGH2) to 12(S)-hydroxy-5(Z),8(E),10(E)-heptadecatrienoic acid (HHT) and malondialdehyde (MDA). The polypeptide is Prostaglandin E synthase 2 (PTGES2) (Bos taurus (Bovine)).